Here is a 1631-residue protein sequence, read N- to C-terminus: Ras GTPase-activating-like protein IQGAP3 (1631 aa).

The region spanning 34–149 (LCRLEEAKRW…YCIHALSLFL (116 aa)) is the Calponin-homology (CH) domain. Position 162 is a phosphotyrosine (Tyr-162). Residue Ser-539 is modified to Phosphoserine. IQ domains follow at residues 730–759 (NVGFVIQLQARLRGFLVRQKFAEHSHFLRT), 760–789 (WLPAVIKIQAHWRGYRQRKIYLEWLQYFKA), 790–819 (NLDAIIKIQAWARMWAARRQYLRRLHYFQK), and 820–849 (NVNSIVKIQAFFRARKAQDDYRILVHAPHP). Residues 1004-1253 (YLLLQLFKTA…LKFRKFIHRA (250 aa)) enclose the Ras-GAP domain. The residue at position 1424 (Ser-1424) is a Phosphoserine.

The chain is Ras GTPase-activating-like protein IQGAP3 (IQGAP3) from Homo sapiens (Human).